The sequence spans 105 residues: Large ribosomal subunit protein uL24 (105 aa).

Belongs to the universal ribosomal protein uL24 family. Part of the 50S ribosomal subunit.

Functionally, one of two assembly initiator proteins, it binds directly to the 5'-end of the 23S rRNA, where it nucleates assembly of the 50S subunit. Its function is as follows. One of the proteins that surrounds the polypeptide exit tunnel on the outside of the subunit. This Methylobacterium sp. (strain 4-46) protein is Large ribosomal subunit protein uL24.